The chain runs to 372 residues: Meiotic drive suppressor wtf18 (372 aa).

The next 6 membrane-spanning stretches (helical) occupy residues 86-106 (FLLR…TAWV), 120-140 (AFSV…FCFF), 153-173 (VTVI…AQCV), 197-217 (DLVV…FGCV), 233-253 (CSIS…IWTL), and 257-277 (LFGL…TKGL).

It belongs to the WTF family. Homomer. Interacts with other proteins that exhibit high sequence similarity.

It is found in the spore membrane. Its subcellular location is the vacuole membrane. Its function is as follows. Acts as a suppressor component of the dual wtf meiotic drive system, and can suppress but not confer meiotic drive by compatible poisons. Wtf meiotic drive systems promote unequal transmission of alleles from the parental zygote to progeny spores by encoding a poison and an antidote from the same locus; the poison is trans-acting and forms toxic aggregates in all spores within an ascus, wherease the antidote is spore-specific and targets aggregates for degradation by the vacuole. Meiotic drive by wtf systems therefore lead to poisoning of all progeny that do not inherit the dual poison/antidote allele, or express a compatible antidote. This Schizosaccharomyces pombe (strain 972 / ATCC 24843) (Fission yeast) protein is Meiotic drive suppressor wtf18.